A 289-amino-acid polypeptide reads, in one-letter code: Ribosomal RNA small subunit methyltransferase A (289 aa).

Positions 27, 29, 54, 76, 102, and 123 each coordinate S-adenosyl-L-methionine.

This sequence belongs to the class I-like SAM-binding methyltransferase superfamily. rRNA adenine N(6)-methyltransferase family. RsmA subfamily.

It localises to the cytoplasm. The enzyme catalyses adenosine(1518)/adenosine(1519) in 16S rRNA + 4 S-adenosyl-L-methionine = N(6)-dimethyladenosine(1518)/N(6)-dimethyladenosine(1519) in 16S rRNA + 4 S-adenosyl-L-homocysteine + 4 H(+). Functionally, specifically dimethylates two adjacent adenosines (A1518 and A1519) in the loop of a conserved hairpin near the 3'-end of 16S rRNA in the 30S particle. May play a critical role in biogenesis of 30S subunits. The sequence is that of Ribosomal RNA small subunit methyltransferase A from Maricaulis maris (strain MCS10) (Caulobacter maris).